A 139-amino-acid polypeptide reads, in one-letter code: Arsenate reductase (139 aa).

Catalysis depends on nucleophile residues C10, C82, and C89. Disulfide bonds link C10-C82 and C82-C89.

Belongs to the low molecular weight phosphotyrosine protein phosphatase family. Thioredoxin-coupled ArsC subfamily.

The protein localises to the cytoplasm. The enzyme catalyses arsenate + [thioredoxin]-dithiol + H(+) = arsenite + [thioredoxin]-disulfide + H2O. Catalyzes the reduction of arsenate [As(V)] to arsenite [As(III)]. The polypeptide is Arsenate reductase (Halalkalibacterium halodurans (strain ATCC BAA-125 / DSM 18197 / FERM 7344 / JCM 9153 / C-125) (Bacillus halodurans)).